We begin with the raw amino-acid sequence, 127 residues long: Sulfiredoxin (127 aa).

The protein belongs to the sulfiredoxin family. Mg(2+) is required as a cofactor. Forms a transient disulfide bond with TSA1 during the reduction of cysteine sulfinic acid (-SO2H).

The protein localises to the cytoplasm. Its subcellular location is the nucleus. It carries out the reaction S-hydroxy-S-oxy-L-cysteinyl-[peroxiredoxin] + [protein]-dithiol + ATP = S-hydroxy-L-cysteinyl-[peroxiredoxin] + [protein]-disulfide + ADP + phosphate. In terms of biological role, contributes to oxidative stress resistance by reducing cysteine-sulfinic acid formed under exposure to oxidants in the peroxiredoxin TSA1. May catalyze the reduction in a multi-step process by acting both as a specific phosphotransferase and as thioltransferase. In Saccharomyces cerevisiae (strain ATCC 204508 / S288c) (Baker's yeast), this protein is Sulfiredoxin.